Here is a 201-residue protein sequence, read N- to C-terminus: Large ribosomal subunit protein bL25 (201 aa).

The tract at residues 181–201 (APRESEEEAEEEATETAKESE) is disordered. The segment covering 185-194 (SEEEAEEEAT) has biased composition (acidic residues).

Belongs to the bacterial ribosomal protein bL25 family. CTC subfamily. In terms of assembly, part of the 50S ribosomal subunit; part of the 5S rRNA/L5/L18/L25 subcomplex. Contacts the 5S rRNA. Binds to the 5S rRNA independently of L5 and L18.

This is one of the proteins that binds to the 5S RNA in the ribosome where it forms part of the central protuberance. The polypeptide is Large ribosomal subunit protein bL25 (Thermoanaerobacter pseudethanolicus (strain ATCC 33223 / 39E) (Clostridium thermohydrosulfuricum)).